The following is a 327-amino-acid chain: tRNA uridine(34) hydroxylase (327 aa).

One can recognise a Rhodanese domain in the interval 123 to 217; it reads SDPEVLLVDT…YLEEVKLEES (95 aa). Residue Cys177 is the Cysteine persulfide intermediate of the active site.

Belongs to the TrhO family.

The enzyme catalyses uridine(34) in tRNA + AH2 + O2 = 5-hydroxyuridine(34) in tRNA + A + H2O. Catalyzes oxygen-dependent 5-hydroxyuridine (ho5U) modification at position 34 in tRNAs. In Shewanella pealeana (strain ATCC 700345 / ANG-SQ1), this protein is tRNA uridine(34) hydroxylase.